Here is a 529-residue protein sequence, read N- to C-terminus: MPTDCISYQTSGYFSKLIQDYLDQKSELKTLYNHFPTLENFEKQIAEKASNFDNHNRIALVNTLKKQYQNIEISDSTKQNIELLALENTFTITTGHQLNLFSGPLYFLYKIISTINLTKELKSKYPSYNFVPVYWMATEDHDFEEINYFNFKGKKFRWNKESNGPVGRLSTEGLAEFLDIYSLELGSSTNANTLKKLFEDTYLKHDNLADATRFLANSLFANYGLVIIDADDADLKRAFIPYAKEELEKQTSYKAVQETIEQLKEYTVQVNPREINLFYIEDNLRERIIFEEDKYFVNNTKISFSKDQILSELENHPEKFSPNVIMRPLYQEIILPNLCYIGGGGEIAYWLELKSFFDAVNITFPMILVRNSVLLATEKQAKKADQLNLSWKDLFTKQENLVNAITHKISAFPIDLTPQKEILKTQFQYLYELAAQTDKSFSGAVKAQEVKQTKGLENLEKRLLKAQKRNLSDQLQRVIDLQCELFPNNSLQERQSNFSEFYLEKGEQLVPLLLQKLKPLEMNFNIITI.

Residues 450-485 (VKQTKGLENLEKRLLKAQKRNLSDQLQRVIDLQCEL) adopt a coiled-coil conformation.

Belongs to the BshC family.

The polypeptide is Putative cysteine ligase BshC (Flavobacterium johnsoniae (strain ATCC 17061 / DSM 2064 / JCM 8514 / BCRC 14874 / CCUG 350202 / NBRC 14942 / NCIMB 11054 / UW101) (Cytophaga johnsonae)).